The chain runs to 216 residues: Probable GTP-binding protein EngB (216 aa).

In terms of domain architecture, EngB-type G spans 27–201 (GGVEIAFAGR…AQTLTGWYLA (175 aa)). GTP is bound by residues 35-42 (GRSNAGKS), 62-66 (GRTQL), 80-83 (DLPG), 147-150 (TKAD), and 180-182 (FSS). 2 residues coordinate Mg(2+): serine 42 and threonine 64.

The protein belongs to the TRAFAC class TrmE-Era-EngA-EngB-Septin-like GTPase superfamily. EngB GTPase family. Requires Mg(2+) as cofactor.

In terms of biological role, necessary for normal cell division and for the maintenance of normal septation. This chain is Probable GTP-binding protein EngB, found in Aeromonas hydrophila subsp. hydrophila (strain ATCC 7966 / DSM 30187 / BCRC 13018 / CCUG 14551 / JCM 1027 / KCTC 2358 / NCIMB 9240 / NCTC 8049).